Reading from the N-terminus, the 273-residue chain is NAD(P)H-hydrate epimerase (273 aa).

A YjeF N-terminal domain is found at 52–260; it reads AQQIDQELFN…GIIQKYELNL (209 aa). 105–109 is a binding site for (6S)-NADPHX; sequence NNGGD. Asn106 and Asp170 together coordinate K(+). (6S)-NADPHX-binding positions include 174 to 180 and Asp203; that span reads GFSFKGE. Residue Ser206 participates in K(+) binding.

It belongs to the NnrE/AIBP family. Requires K(+) as cofactor.

The catalysed reaction is (6R)-NADHX = (6S)-NADHX. The enzyme catalyses (6R)-NADPHX = (6S)-NADPHX. In terms of biological role, catalyzes the epimerization of the S- and R-forms of NAD(P)HX, a damaged form of NAD(P)H that is a result of enzymatic or heat-dependent hydration. This is a prerequisite for the S-specific NAD(P)H-hydrate dehydratase to allow the repair of both epimers of NAD(P)HX. This is NAD(P)H-hydrate epimerase from Branchiostoma floridae (Florida lancelet).